Consider the following 339-residue polypeptide: Biotin synthase (339 aa).

A Radical SAM core domain is found at 55-288; that stretch reads LSEGALHSCS…GKIIKFAAGR (234 aa). The [4Fe-4S] cluster site is built by Cys-73, Cys-77, and Cys-80. [2Fe-2S] cluster contacts are provided by Cys-152, Cys-213, and Lys-283.

This sequence belongs to the radical SAM superfamily. Biotin synthase family. Homodimer. The cofactor is [4Fe-4S] cluster. [2Fe-2S] cluster is required as a cofactor.

It catalyses the reaction (4R,5S)-dethiobiotin + (sulfur carrier)-SH + 2 reduced [2Fe-2S]-[ferredoxin] + 2 S-adenosyl-L-methionine = (sulfur carrier)-H + biotin + 2 5'-deoxyadenosine + 2 L-methionine + 2 oxidized [2Fe-2S]-[ferredoxin]. Its pathway is cofactor biosynthesis; biotin biosynthesis; biotin from 7,8-diaminononanoate: step 2/2. Catalyzes the conversion of dethiobiotin (DTB) to biotin by the insertion of a sulfur atom into dethiobiotin via a radical-based mechanism. The protein is Biotin synthase of Chlorobium phaeobacteroides (strain BS1).